We begin with the raw amino-acid sequence, 362 residues long: Protein BIG GRAIN 1-like D (362 aa).

Disordered stretches follow at residues 22-113 (IDPK…TLFH), 132-168 (KFNR…GGRI), and 303-327 (VKTN…ASDS). The span at 23 to 47 (DPKTQKTQPYVGSVNTTTKKQSIVT) shows a compositional bias: polar residues. A compositionally biased stretch (basic and acidic residues) spans 50-60 (VPDRKIHRDRF). Low complexity predominate over residues 63-78 (SVSSSSDSNSSIFSSS). A compositionally biased stretch (basic and acidic residues) spans 132 to 144 (KFNRHDENWENTR). Residues 309–324 (EDYEDDDEDDDDDDVA) are compositionally biased toward acidic residues.

It belongs to the BIG GRAIN 1 (BG1) plant protein family.

It is found in the cell membrane. In terms of biological role, involved in auxin transport. Regulator of the auxin signaling pathway. The polypeptide is Protein BIG GRAIN 1-like D (Arabidopsis thaliana (Mouse-ear cress)).